Consider the following 244-residue polypeptide: Uridylate kinase (244 aa).

Residue 15 to 18 (KLSG) participates in ATP binding. Residues 23–28 (GSEGFG) form an involved in allosteric activation by GTP region. Glycine 57 serves as a coordination point for UMP. Residues glycine 58 and arginine 62 each contribute to the ATP site. Residues aspartate 77 and 138–145 (TGNPFFTT) each bind UMP. 3 residues coordinate ATP: threonine 165, phenylalanine 171, and aspartate 174.

This sequence belongs to the UMP kinase family. In terms of assembly, homohexamer.

It localises to the cytoplasm. The catalysed reaction is UMP + ATP = UDP + ADP. The protein operates within pyrimidine metabolism; CTP biosynthesis via de novo pathway; UDP from UMP (UMPK route): step 1/1. With respect to regulation, allosterically activated by GTP. Inhibited by UTP. Functionally, catalyzes the reversible phosphorylation of UMP to UDP. This chain is Uridylate kinase, found in Aeromonas salmonicida (strain A449).